A 204-amino-acid chain; its full sequence is Superoxide dismutase [Mn] (204 aa).

Histidine 29, histidine 84, aspartate 167, and histidine 171 together coordinate Mn(2+).

The protein belongs to the iron/manganese superoxide dismutase family. Homotetramer. The cofactor is Mn(2+).

The enzyme catalyses 2 superoxide + 2 H(+) = H2O2 + O2. Destroys superoxide anion radicals which are normally produced within the cells and which are toxic to biological systems. The polypeptide is Superoxide dismutase [Mn] (sodA) (Thermus thermophilus (strain ATCC BAA-163 / DSM 7039 / HB27)).